Consider the following 405-residue polypeptide: uncharacterized protein (405 aa).

The N-terminal stretch at 1–34 (MNKFLKYFLILLALVLIVVPIVFATLLFKTSQDA) is a signal peptide. Residues 348–359 (EQNDTTDKDKTS) are compositionally biased toward basic and acidic residues. The interval 348–405 (EQNDTTDKDKTSNENSDSTNNSDSSNQQQPATDQNSNQNQGGTQQAPQASNNQNGVVN) is disordered. Low complexity-rich tracts occupy residues 360–373 (NENS…DSSN) and 381–392 (QNSNQNQGGTQQ). Residues 393-405 (APQASNNQNGVVN) are compositionally biased toward polar residues.

The protein belongs to the LytR/CpsA/Psr (LCP) family.

This is an uncharacterized protein from Staphylococcus aureus (strain NCTC 8325 / PS 47).